The following is a 211-amino-acid chain: Uracil phosphoribosyltransferase (211 aa).

5-phospho-alpha-D-ribose 1-diphosphate contacts are provided by residues R78, R103, and 130 to 138; that span reads DPMLATGGT. Uracil is bound by residues I195 and 200–202; that span reads GDA. A 5-phospho-alpha-D-ribose 1-diphosphate-binding site is contributed by D201.

It belongs to the UPRTase family. The cofactor is Mg(2+).

It carries out the reaction UMP + diphosphate = 5-phospho-alpha-D-ribose 1-diphosphate + uracil. It participates in pyrimidine metabolism; UMP biosynthesis via salvage pathway; UMP from uracil: step 1/1. With respect to regulation, allosterically activated by GTP. Functionally, catalyzes the conversion of uracil and 5-phospho-alpha-D-ribose 1-diphosphate (PRPP) to UMP and diphosphate. The sequence is that of Uracil phosphoribosyltransferase from Arthrobacter sp. (strain FB24).